The sequence spans 100 residues: NADH-quinone oxidoreductase subunit K 2 (100 aa).

3 helical membrane passes run 4 to 24 (LWWY…GVLI), 28 to 48 (ILVV…NFIA), and 60 to 80 (IFAI…LGIL).

This sequence belongs to the complex I subunit 4L family. NDH-1 is composed of 14 different subunits. Subunits NuoA, H, J, K, L, M, N constitute the membrane sector of the complex.

The protein resides in the cell inner membrane. It carries out the reaction a quinone + NADH + 5 H(+)(in) = a quinol + NAD(+) + 4 H(+)(out). In terms of biological role, NDH-1 shuttles electrons from NADH, via FMN and iron-sulfur (Fe-S) centers, to quinones in the respiratory chain. The immediate electron acceptor for the enzyme in this species is believed to be ubiquinone. Couples the redox reaction to proton translocation (for every two electrons transferred, four hydrogen ions are translocated across the cytoplasmic membrane), and thus conserves the redox energy in a proton gradient. The sequence is that of NADH-quinone oxidoreductase subunit K 2 from Rhizobium etli (strain ATCC 51251 / DSM 11541 / JCM 21823 / NBRC 15573 / CFN 42).